A 713-amino-acid chain; its full sequence is Elongation factor G (713 aa).

The region spanning E8–V290 is the tr-type G domain. GTP is bound by residues A17 to T24, D88 to H92, and N142 to D145.

It belongs to the TRAFAC class translation factor GTPase superfamily. Classic translation factor GTPase family. EF-G/EF-2 subfamily.

It is found in the cytoplasm. In terms of biological role, catalyzes the GTP-dependent ribosomal translocation step during translation elongation. During this step, the ribosome changes from the pre-translocational (PRE) to the post-translocational (POST) state as the newly formed A-site-bound peptidyl-tRNA and P-site-bound deacylated tRNA move to the P and E sites, respectively. Catalyzes the coordinated movement of the two tRNA molecules, the mRNA and conformational changes in the ribosome. This is Elongation factor G from Stenotrophomonas maltophilia (strain K279a).